Consider the following 88-residue polypeptide: Putative transposase InsN for insertion sequence element IS911B (88 aa).

Belongs to the transposase 8 family.

Involved in the transposition of the insertion sequence IS911. The chain is Putative transposase InsN for insertion sequence element IS911B (insN2) from Escherichia coli (strain K12).